A 407-amino-acid polypeptide reads, in one-letter code: Argininosuccinate synthase (407 aa).

Residues 16 to 24 and Ala44 each bind ATP; that span reads AYSGGLDTS. L-citrulline-binding residues include Tyr96 and Ser101. Residue Gly126 coordinates ATP. Thr128, Asn132, and Asp133 together coordinate L-aspartate. Residue Asn132 participates in L-citrulline binding. The L-citrulline site is built by Arg136, Ser185, Ser194, Glu270, and Tyr282.

This sequence belongs to the argininosuccinate synthase family. Type 1 subfamily. As to quaternary structure, homotetramer.

It localises to the cytoplasm. It catalyses the reaction L-citrulline + L-aspartate + ATP = 2-(N(omega)-L-arginino)succinate + AMP + diphosphate + H(+). It functions in the pathway amino-acid biosynthesis; L-arginine biosynthesis; L-arginine from L-ornithine and carbamoyl phosphate: step 2/3. The polypeptide is Argininosuccinate synthase (Shewanella sp. (strain ANA-3)).